A 198-amino-acid chain; its full sequence is Small ribosomal subunit protein uS4 (198 aa).

Residues 90 to 152 (TRLDNLVLRA…SRSNELFKEN (63 aa)) form the S4 RNA-binding domain.

Belongs to the universal ribosomal protein uS4 family. As to quaternary structure, part of the 30S ribosomal subunit. Contacts protein S5. The interaction surface between S4 and S5 is involved in control of translational fidelity.

One of the primary rRNA binding proteins, it binds directly to 16S rRNA where it nucleates assembly of the body of the 30S subunit. Its function is as follows. With S5 and S12 plays an important role in translational accuracy. This Finegoldia magna (strain ATCC 29328 / DSM 20472 / WAL 2508) (Peptostreptococcus magnus) protein is Small ribosomal subunit protein uS4.